The chain runs to 203 residues: Imidazole glycerol phosphate synthase subunit HisH 1 (203 aa).

In terms of domain architecture, Glutamine amidotransferase type-1 spans 1–203; that stretch reads MIAIIDYNAG…KMIENFVELI (203 aa). Residue Cys-82 is the Nucleophile of the active site. Catalysis depends on residues His-184 and Glu-186.

As to quaternary structure, heterodimer of HisH and HisF.

The protein localises to the cytoplasm. It carries out the reaction 5-[(5-phospho-1-deoxy-D-ribulos-1-ylimino)methylamino]-1-(5-phospho-beta-D-ribosyl)imidazole-4-carboxamide + L-glutamine = D-erythro-1-(imidazol-4-yl)glycerol 3-phosphate + 5-amino-1-(5-phospho-beta-D-ribosyl)imidazole-4-carboxamide + L-glutamate + H(+). It catalyses the reaction L-glutamine + H2O = L-glutamate + NH4(+). It functions in the pathway amino-acid biosynthesis; L-histidine biosynthesis; L-histidine from 5-phospho-alpha-D-ribose 1-diphosphate: step 5/9. Its function is as follows. IGPS catalyzes the conversion of PRFAR and glutamine to IGP, AICAR and glutamate. The HisH subunit provides the glutamine amidotransferase activity that produces the ammonia necessary to HisF for the synthesis of IGP and AICAR. The chain is Imidazole glycerol phosphate synthase subunit HisH 1 (hisH1) from Methanococcus maripaludis (strain DSM 14266 / JCM 13030 / NBRC 101832 / S2 / LL).